Reading from the N-terminus, the 284-residue chain is 2-dehydro-3-deoxyphosphooctonate aldolase (284 aa).

This sequence belongs to the KdsA family.

It localises to the cytoplasm. It catalyses the reaction D-arabinose 5-phosphate + phosphoenolpyruvate + H2O = 3-deoxy-alpha-D-manno-2-octulosonate-8-phosphate + phosphate. It functions in the pathway carbohydrate biosynthesis; 3-deoxy-D-manno-octulosonate biosynthesis; 3-deoxy-D-manno-octulosonate from D-ribulose 5-phosphate: step 2/3. Its pathway is bacterial outer membrane biogenesis; lipopolysaccharide biosynthesis. This chain is 2-dehydro-3-deoxyphosphooctonate aldolase, found in Pectobacterium carotovorum subsp. carotovorum (strain PC1).